A 64-amino-acid polypeptide reads, in one-letter code: Large ribosomal subunit protein bL35 (64 aa).

Positions Met1–Arg15 are enriched in basic residues. Residues Met1 to Gly20 form a disordered region.

The protein belongs to the bacterial ribosomal protein bL35 family.

This chain is Large ribosomal subunit protein bL35, found in Nocardioides sp. (strain ATCC BAA-499 / JS614).